We begin with the raw amino-acid sequence, 110 residues long: Phosphoribosyl-AMP cyclohydrolase (110 aa).

Asp80 contacts Mg(2+). A Zn(2+)-binding site is contributed by Cys81. 2 residues coordinate Mg(2+): Asp82 and Asp84. Positions 97 and 104 each coordinate Zn(2+).

Belongs to the PRA-CH family. Homodimer. Requires Mg(2+) as cofactor. Zn(2+) serves as cofactor.

It is found in the cytoplasm. The catalysed reaction is 1-(5-phospho-beta-D-ribosyl)-5'-AMP + H2O = 1-(5-phospho-beta-D-ribosyl)-5-[(5-phospho-beta-D-ribosylamino)methylideneamino]imidazole-4-carboxamide. It functions in the pathway amino-acid biosynthesis; L-histidine biosynthesis; L-histidine from 5-phospho-alpha-D-ribose 1-diphosphate: step 3/9. Catalyzes the hydrolysis of the adenine ring of phosphoribosyl-AMP. The protein is Phosphoribosyl-AMP cyclohydrolase of Clostridium botulinum (strain Okra / Type B1).